We begin with the raw amino-acid sequence, 287 residues long: MEFSVAHPAVKAFMCGSLSGTCSTLLFQPLDLVKTRLQTLQSGVQPGTGRVGMVTVFVNVLRTEKLLGLWRGVSPSFVRCIPGVGIYFSTYFTLKQRYFSSGAPGPLQAVLLGAGARCVAGVFMLPVTVIKTRFESGRYRYSGVFGALRSVCQTEGPKALFSGLMATLLRDAPFSGIYVMIYSQTKHLLPPEISQSSYAPVANFSCGVLAGVLASVLTQPADVVKTHIQVSPDVFSRTSDVVRYIYKEHGLVGFFRGAVPRSLRRTMMAAMAWTVYEQLMAQIGLKS.

Solcar repeat units follow at residues 7–97 (HPAV…LKQR), 104–188 (PGPL…TKHL), and 198–282 (YAPV…LMAQ). The next 6 helical transmembrane spans lie at 13–38 (FMCGSLSGTCSTLLFQPLDLVKTRLQ), 72–98 (GVSPSFVRCIPGVGIYFSTYFTLKQRY), 110–135 (VLLGAGARCVAGVFMLPVTVIKTRFE), 163–186 (GLMATLLRDAPFSGIYVMIYSQTK), 202–228 (ANFSCGVLAGVLASVLTQPADVVKTHI), and 257–275 (GAVPRSLRRTMMAAMAWTV).

The protein belongs to the mitochondrial carrier (TC 2.A.29) family. SLC25A38 subfamily. In terms of tissue distribution, at 24 hours post-fertilization, expressed predominantly in posterior blood island, posterior cardinal vein and circulating blood, as well as in somites, brain and retina. At 34 hours post-fertilization, becomes restricted to posterior blood island and circulating blood.

The protein localises to the mitochondrion inner membrane. It carries out the reaction glycine(in) = glycine(out). In terms of biological role, mitochondrial glycine transporter that imports glycine into the mitochondrial matrix. Plays an important role in providing glycine for the first enzymatic step in heme biosynthesis, the condensation of glycine with succinyl-CoA to produce 5-aminolevulinate (ALA) in the mitochondrial matrix. Required during erythropoiesis. May play a role as pro-apoptotic protein that induces caspase-dependent apoptosis. The sequence is that of Mitochondrial glycine transporter A (slc25a38a) from Danio rerio (Zebrafish).